We begin with the raw amino-acid sequence, 179 residues long: Fas apoptotic inhibitory molecule 1 (179 aa).

Position 2 is an N-acetylthreonine (threonine 2).

It belongs to the FAIM1 family. Widely expressed, with the highest levels in brain, thymus, kidney, and spleen.

It is found in the cytoplasm. Its function is as follows. Plays a role as an inducible effector molecule that mediates Fas resistance produced by surface Ig engagement in B cells. The protein is Fas apoptotic inhibitory molecule 1 (Faim) of Mus musculus (Mouse).